Consider the following 201-residue polypeptide: 3-isopropylmalate dehydratase small subunit (201 aa).

The protein belongs to the LeuD family. LeuD type 1 subfamily. As to quaternary structure, heterodimer of LeuC and LeuD.

The enzyme catalyses (2R,3S)-3-isopropylmalate = (2S)-2-isopropylmalate. Its pathway is amino-acid biosynthesis; L-leucine biosynthesis; L-leucine from 3-methyl-2-oxobutanoate: step 2/4. In terms of biological role, catalyzes the isomerization between 2-isopropylmalate and 3-isopropylmalate, via the formation of 2-isopropylmaleate. The polypeptide is 3-isopropylmalate dehydratase small subunit (Shewanella sp. (strain MR-4)).